A 965-amino-acid polypeptide reads, in one-letter code: Translation initiation factor IF-2 (965 aa).

Residues 94–375 (RTFVRRDEAA…RGKHQESTTF (282 aa)) are disordered. A compositionally biased stretch (low complexity) spans 104-115 (EQAAEATGNGQE). The segment covering 121–177 (ELQRREEEARHEAELLEKQAQELKARQEQLAREEAERQAREQAAEAERRRAEEEAAK) has biased composition (basic and acidic residues). The segment covering 181-191 (AAVAEAAAAAR) has biased composition (low complexity). Residues 192–253 (EQAEQERASQ…KAEAEARAIR (62 aa)) are compositionally biased toward basic and acidic residues. A compositionally biased stretch (pro residues) spans 267 to 276 (PEPPPKPAEA). Positions 303 to 320 (KKPAPAAAAQPAATTQPA) are enriched in low complexity. Gly residues predominate over residues 351–364 (TSGGVDRGWRGGPK). One can recognise a tr-type G domain in the interval 465-634 (PRPPVVTVMG…LLQAEVLELK (170 aa)). Positions 474–481 (GHVDHGKT) are G1. 474–481 (GHVDHGKT) serves as a coordination point for GTP. Positions 499–503 (GITQH) are G2. Positions 520 to 523 (DTPG) are G3. Residues 520-524 (DTPGH) and 574-577 (NKID) contribute to the GTP site. The interval 574 to 577 (NKID) is G4. The segment at 610-612 (SAK) is G5.

It belongs to the TRAFAC class translation factor GTPase superfamily. Classic translation factor GTPase family. IF-2 subfamily.

It is found in the cytoplasm. Functionally, one of the essential components for the initiation of protein synthesis. Protects formylmethionyl-tRNA from spontaneous hydrolysis and promotes its binding to the 30S ribosomal subunits. Also involved in the hydrolysis of GTP during the formation of the 70S ribosomal complex. This chain is Translation initiation factor IF-2, found in Paraburkholderia phymatum (strain DSM 17167 / CIP 108236 / LMG 21445 / STM815) (Burkholderia phymatum).